We begin with the raw amino-acid sequence, 70 residues long: Cytochrome c oxidase subunit 8B, mitochondrial (70 aa).

A mitochondrion-targeting transit peptide spans 1–24 (MPRLPPALRLLQPPLRCWVVPKLH). Residues 25–35 (VSAKPARTPTS) lie on the Mitochondrial matrix side of the membrane. The helical transmembrane segment at 36–59 (PAEQAVGLSMMFLSFLVPAGWVLS) threads the bilayer. Topologically, residues 60-70 (HLESYKKSSTA) are mitochondrial intermembrane.

Belongs to the cytochrome c oxidase VIII family. As to quaternary structure, component of the cytochrome c oxidase (complex IV, CIV), a multisubunit enzyme composed of 14 subunits. The complex is composed of a catalytic core of 3 subunits MT-CO1, MT-CO2 and MT-CO3, encoded in the mitochondrial DNA, and 11 supernumerary subunits COX4I, COX5A, COX5B, COX6A, COX6B, COX6C, COX7A, COX7B, COX7C, COX8 and NDUFA4, which are encoded in the nuclear genome. The complex exists as a monomer or a dimer and forms supercomplexes (SCs) in the inner mitochondrial membrane with NADH-ubiquinone oxidoreductase (complex I, CI) and ubiquinol-cytochrome c oxidoreductase (cytochrome b-c1 complex, complex III, CIII), resulting in different assemblies (supercomplex SCI(1)III(2)IV(1) and megacomplex MCI(2)III(2)IV(2)).

Its subcellular location is the mitochondrion inner membrane. It participates in energy metabolism; oxidative phosphorylation. In terms of biological role, component of the cytochrome c oxidase, the last enzyme in the mitochondrial electron transport chain which drives oxidative phosphorylation. The respiratory chain contains 3 multisubunit complexes succinate dehydrogenase (complex II, CII), ubiquinol-cytochrome c oxidoreductase (cytochrome b-c1 complex, complex III, CIII) and cytochrome c oxidase (complex IV, CIV), that cooperate to transfer electrons derived from NADH and succinate to molecular oxygen, creating an electrochemical gradient over the inner membrane that drives transmembrane transport and the ATP synthase. Cytochrome c oxidase is the component of the respiratory chain that catalyzes the reduction of oxygen to water. Electrons originating from reduced cytochrome c in the intermembrane space (IMS) are transferred via the dinuclear copper A center (CU(A)) of subunit 2 and heme A of subunit 1 to the active site in subunit 1, a binuclear center (BNC) formed by heme A3 and copper B (CU(B)). The BNC reduces molecular oxygen to 2 water molecules using 4 electrons from cytochrome c in the IMS and 4 protons from the mitochondrial matrix. The polypeptide is Cytochrome c oxidase subunit 8B, mitochondrial (COX8B) (Eulemur fulvus fulvus (Brown lemur)).